A 1497-amino-acid polypeptide reads, in one-letter code: Collagen alpha-2(V) chain (1497 aa).

The N-terminal stretch at 1–26 (MMANWVGARPLLILSVLLGYCVSIKA) is a signal peptide. Positions 38–96 (IACTQHGQMYLNRDIWKPSPCQICVCDNGAILCDKIECPEVLNCANPITPTGECCPVCP) constitute a VWFC domain. Residues 103–1265 (TSFGRGRKGQ…PDDTNKTDPG (1163 aa)) form a disordered region. Positions 141-143 (RGD) match the Cell attachment site motif. The segment covering 155-164 (PQGIDGEPGV) has biased composition (low complexity). Residues 168–180 (PGAPGPPGHPSHP) show a composition bias toward pro residues. Over residues 210-225 (PGSVGPVGPRGPQGLQ) the composition is skewed to low complexity. Pro residues predominate over residues 234–246 (AGPPGEPGEPGPM). 3 positions are modified to 4-hydroxyproline: proline 288, proline 291, and proline 294. Composition is skewed to low complexity over residues 320–338 (EAGPTGPMGAMGPLGPRGM) and 425–441 (TPGAKGPTGSAGTSGPP). Residues 504–506 (RGD) carry the Cell attachment site motif. Residues 550 to 559 (GPKGGQGDPG) show a composition bias toward gly residues. Residues 602 to 611 (SIGIRGQPGS) are compositionally biased toward low complexity. A 4-hydroxyproline mark is found at proline 609 and proline 615. Basic and acidic residues predominate over residues 708-719 (RGERGNPGERGE). Positions 730–739 (GMAGGHGPDG) are enriched in gly residues. A compositionally biased stretch (low complexity) spans 744-756 (PGPTGTIGDTGPP). Basic and acidic residues predominate over residues 774–785 (KGDRGGIGEKGA). Low complexity-rich tracts occupy residues 824–839 (PPGSRGNPGSRGENGP) and 878–891 (LAGSPGPHGPHGVP). The segment covering 892-901 (GLKGGRGTQG) has biased composition (gly residues). Residues 917–927 (PPGPAGAPGPA) show a composition bias toward pro residues. Short sequence motifs (cell attachment site) lie at residues 942 to 944 (RGD), 1065 to 1067 (RGD), and 1068 to 1070 (RGD). Positions 1061-1070 (AVGERGDRGD) are enriched in basic and acidic residues. Low complexity predominate over residues 1091–1112 (APGDAGQRGEPGSRGPVGPPGR). 2 short sequence motifs (cell attachment site) span residues 1125-1127 (RGD) and 1134-1136 (RGD). Residues 1125–1139 (RGDKGDNGDRGDRGQ) show a composition bias toward basic and acidic residues. Composition is skewed to pro residues over residues 1169–1179 (PFGPRGPPGPV) and 1209–1224 (EGPPGEPGPPGPPGPP). Residues 1228–1497 (TAALGDIMGH…GLDIGPVCFM (270 aa)) constitute a propeptide, C-terminal propeptide. Residue asparagine 1260 is glycosylated (N-linked (GlcNAc...) asparagine). Positions 1264–1497 (PGIHVTLKSL…GLDIGPVCFM (234 aa)) constitute a Fibrillar collagen NC1 domain. Disulfide bonds link cysteine 1294–cysteine 1326, cysteine 1334–cysteine 1495, and cysteine 1403–cysteine 1448. Positions 1312, 1314, 1315, and 1320 each coordinate Ca(2+). A glycan (N-linked (GlcNAc...) asparagine) is linked at asparagine 1398.

Belongs to the fibrillar collagen family. Trimers of two alpha 1(V) and one alpha 2(V) chains expressed in most tissues and trimers of one alpha 1(V), one alpha 2(V), and one alpha 3(V) chains with a more limited distribution of expression. In terms of processing, prolines at the third position of the tripeptide repeating unit (G-X-P) are hydroxylated in some or all of the chains. Probably 3-hydroxylated on prolines by LEPREL1. Hydroxylation on proline residues within the sequence motif, GXPG, is most likely to be 4-hydroxy as this fits the requirement for 4-hydroxylation in vertebrates.

It is found in the secreted. It localises to the extracellular space. Its subcellular location is the extracellular matrix. Functionally, type V collagen is a member of group I collagen (fibrillar forming collagen). It is a minor connective tissue component of nearly ubiquitous distribution. Type V collagen binds to DNA, heparan sulfate, thrombospondin, heparin, and insulin. Type V collagen is a key determinant in the assembly of tissue-specific matrices. This Mus musculus (Mouse) protein is Collagen alpha-2(V) chain.